Here is a 1231-residue protein sequence, read N- to C-terminus: Alpha-protein kinase 1 (1231 aa).

ADP-D-glycero-beta-D-manno-heptose-binding positions include Phe-61, Gln-67, Arg-116, 150 to 153, Asp-231, Lys-233, 236 to 237, and Phe-295; these read RQAR and ST. 6 disordered regions span residues 508-540, 609-637, 692-739, 767-791, 811-843, and 859-888; these read ERVS…RSWT, GSGQ…SSRA, GSNN…GDVP, TFAP…SPSQ, PDGS…DEEG, and AHRP…PIFD. Residues 509 to 522 show a composition bias toward polar residues; that stretch reads RVSSQDSRSTASSK. Residues 524–537 are compositionally biased toward basic and acidic residues; sequence SKKDQGKLQRERGR. The span at 700-714 shows a compositional bias: low complexity; the sequence is SSHSCGSDSWSLSSS. Acidic residues predominate over residues 775–784; sequence PEGETAESTD. Residues 1003–1223 form the Alpha-type protein kinase domain; the sequence is KYSKKSELWT…ICHRLSLTRP (221 aa).

It belongs to the protein kinase superfamily. Alpha-type protein kinase family. ALPK subfamily. As to expression, widely expressed. Expressed in the retina and in sweat glands, especially in the myoepithelial cells.

It is found in the cytoplasm. The protein resides in the cytosol. Its subcellular location is the cytoskeleton. The protein localises to the spindle pole. It localises to the microtubule organizing center. It is found in the centrosome. The protein resides in the cell projection. Its subcellular location is the cilium. The enzyme catalyses L-seryl-[protein] + ATP = O-phospho-L-seryl-[protein] + ADP + H(+). It carries out the reaction L-threonyl-[protein] + ATP = O-phospho-L-threonyl-[protein] + ADP + H(+). Serine/threonine-protein kinase activity is stimulated upon ADP-D-glycero-beta-D-manno-heptose (ADP-Heptose)-binding. In terms of biological role, serine/threonine-protein kinase that detects bacterial pathogen-associated molecular pattern metabolites (PAMPs) and initiates an innate immune response, a critical step for pathogen elimination and engagement of adaptive immunity. Specifically recognizes and binds ADP-D-glycero-beta-D-manno-heptose (ADP-Heptose), a potent PAMP present in all Gram-negative and some Gram-positive bacteria. ADP-Heptose-binding stimulates its kinase activity to phosphorylate and activate TIFA, triggering pro-inflammatory NF-kappa-B signaling. May be involved in monosodium urate monohydrate (MSU)-induced inflammation by mediating phosphorylation of unconventional myosin MYO9A. May also play a role in apical protein transport by mediating phosphorylation of unconventional myosin MYO1A. May play a role in ciliogenesis. The polypeptide is Alpha-protein kinase 1 (Mus musculus (Mouse)).